Reading from the N-terminus, the 97-residue chain is Placenta-specific protein 9 (97 aa).

The signal sequence occupies residues 1-22 (MRPLLCALTGLALLRAAGSLAA).

The protein belongs to the PLAC9 family.

The protein localises to the secreted. This chain is Placenta-specific protein 9 (PLAC9), found in Homo sapiens (Human).